The following is a 41-amino-acid chain: Large ribosomal subunit protein bL36 (41 aa).

It belongs to the bacterial ribosomal protein bL36 family.

The chain is Large ribosomal subunit protein bL36 from Hyphomonas neptunium (strain ATCC 15444).